The following is a 147-amino-acid chain: Hemoglobin subunit beta (147 aa).

The Globin domain maps to 3 to 147 (HWTAEEKQLI…VAHALARKYH (145 aa)). Positions 64 and 93 each coordinate heme b.

The protein belongs to the globin family. In terms of assembly, heterotetramer of 2 alpha (or alpha-D) and 2 beta chains. As to expression, red blood cells.

Its function is as follows. Involved in oxygen transport from the lung to the various peripheral tissues. The beta chain is a component of adult hemoglobin A and D. This chain is Hemoglobin subunit beta (HBB), found in Gallus gallus (Chicken).